The chain runs to 262 residues: Oxidoreductase AgnL4 (262 aa).

The protein belongs to the avfA family.

The protein operates within secondary metabolite biosynthesis. Functionally, oxidoreductase; part of the gene cluster that mediates the biosynthesis of agnestins, dihydroxy-xanthone metabolites. The pathway begins with the assembly and cyclization of atrochrysone thioester by the non-reducing polyketide synthase Agnpks1. The atrochrysone carboxyl ACP thioesterase AgnL7 then breaks the thioester bond and releases the atrochrysone carboxylic acid as the first enzyme-free intermediate. The decarboxylase AgnL1 then catalyzes the concerted decarboxylation-elimination required to convert atochrysone carboxylic acid into emodin anthrone, which is further oxidized to emodin by the anthrone oxygenase AgnL2. Emodin then undergoes reduction catalyzed by the oxidoreductase AgnL4 to yield the dihydroquinone tautomer which is the substrate for reduction by the short chain dehydrogenase AgnL6 reduction to produce hydroxyketone, followed by AgnL8 dehydration and likely spontaneous autoxidation to chrysophanol. Baeyer-Villiger oxidation by the oxidase AgnL3 leads to monodictyphenone via cleavage of the C-10/C-10a bond of chrysophanol. Alternative cleavage at the C-4a/C-10 bond of chrysophanol also leads to the formation some cephalone F. Further conversion to agnestins A and B, requires reduction to dihydro-monodictyphenone, oxidation to agnestin C probably via an epoxide, and rearrangement to either agnestin A or agnestin B directly, although agnestin A or agnestin B can also interconvert. Within the cluster, AgnR1 is the only unassigned oxidoreductase present which could be involved in this conversion. However, AgnR1 seems not to be involved in this step, and thus genes involved in the proposed oxidation/reduction may be located elsewhere on the genome. Further agnestin A derivatives are probably formed by spontaneous decarboxylations, dehydrations and methanolysis reactions. In Paecilomyces divaricatus (Penicillium divaricatum), this protein is Oxidoreductase AgnL4.